Reading from the N-terminus, the 527-residue chain is Splicing factor MUD2 (527 aa).

Positions 36-169 are disordered; sequence DNAVIDTHFK…SKFNGDRDKR (134 aa). Residues 42 to 55 are compositionally biased toward basic and acidic residues; it reads THFKRQKSDGELPK. Ser-49 is subject to Phosphoserine. A compositionally biased stretch (polar residues) spans 60–85; the sequence is RNVSHSNNRGPSSIITMSTNRTTYEQ. Residues 94 to 109 show a composition bias toward basic and acidic residues; it reads SYRDASGRSYNRENRY. Residues 110–122 are compositionally biased toward polar residues; it reads SSHNTGPQWNNNP. Basic and acidic residues-rich tracts occupy residues 125-141 and 155-169; these read RQRD…DRRG and RKNE…RDKR. Residues 424-511 form the RRM domain; that stretch reads LLLLNCLDPL…QFNDRTVLCT (88 aa).

MSL5, MUD2 and PRP40 interact to form the commitment complex 2 (CC2), a precursor of mature spliceosomes.

Its function is as follows. Splicing factor that contacts pre-mRNA directly and is a component of the pre-mRNA-U1 snRNP complex (commitment complex 2) that forms during early spliceosome assembly in yeast extracts. In Saccharomyces cerevisiae (strain ATCC 204508 / S288c) (Baker's yeast), this protein is Splicing factor MUD2 (MUD2).